Reading from the N-terminus, the 649-residue chain is MNLKEWLLFSDAVFFAQGTLAWSPSNSYTPANVSCDEDINLIRQASGPSDNETEWLKKRDVYTREALRSFLDRATSNFSDSSLVSQLFSNASDIPRIAVACSGGGYRAMLSGAGMLAAMDNRTDGANEHGLGGLLQSTTYLAGLSGGNWLVGTLAWNNWTSVQDIVNNMTEDDSIWDISNSIINPGGFMIVTTIKRWDHISDAVEGKQDAGFNVSLTDIWGRALSYNFFPSLYRGGVAYTWSTLRDVEVFQNGEMPFPISVADGRYPGTQIIDLNATVFEFNPFEMGSWDPTLNAFTDVKYLGTKVSNGEPVNKGQCVAGYDNTGFIMGTSSSLFNQFLLQINSTSLPSFIKNLVTGFLDDLSEDEDDIAIYAPNPFKDTSYIQDNFSKSISESDYLYLVDGGEDNQNIPLVPLVQDERNVDVIFALDNSADTDYYWPDGASLVSTYERQFSSQGLNMSFPYVPDKRTFVNLGLADKPSFFGCDAQNLTDLNYIPPLVVYIPNARHSYNSNTSTFKLSYTDDERLKMIKNGFEAATRGNLTDDSSFMGCVACAVMRRKQQSLNATLPEECSTCFTNYCWNGTIDDTPVSGLDNSDFDPTAASSAYSAYNTESYSSSSATGSKKNGAGLPATPTSFTSILTLLTAIAGFL.

Positions 1-21 are cleaved as a signal peptide; the sequence is MNLKEWLLFSDAVFFAQGTLA. N-linked (GlcNAc...) asparagine glycosylation is found at asparagine 32, asparagine 51, asparagine 77, asparagine 90, asparagine 121, asparagine 158, asparagine 168, asparagine 213, asparagine 275, asparagine 343, asparagine 386, asparagine 457, asparagine 487, asparagine 511, asparagine 539, asparagine 563, and asparagine 580. Residues 34 to 584 form the PLA2c domain; that stretch reads SCDEDINLIR…TNYCWNGTID (551 aa).

It belongs to the lysophospholipase family.

It localises to the secreted. It carries out the reaction a 1-acyl-sn-glycero-3-phosphocholine + H2O = sn-glycerol 3-phosphocholine + a fatty acid + H(+). Catalyzes the release of fatty acids from lysophospholipids. This Torulaspora delbrueckii (Yeast) protein is Lysophospholipase.